The following is a 1161-amino-acid chain: ATP-dependent helicase/deoxyribonuclease subunit B (1161 aa).

This sequence belongs to the helicase family. AddB/RexB type 2 subfamily. Heterodimer of AddA and RexB. Mg(2+) serves as cofactor.

Functionally, the heterodimer acts as both an ATP-dependent DNA helicase and an ATP-dependent, dual-direction single-stranded exonuclease. Recognizes the chi site generating a DNA molecule suitable for the initiation of homologous recombination. This subunit has 5' -&gt; 3' nuclease activity but not helicase activity. This chain is ATP-dependent helicase/deoxyribonuclease subunit B, found in Oenococcus oeni (strain ATCC BAA-331 / PSU-1).